Consider the following 284-residue polypeptide: uncharacterized protein (284 aa).

Residues 1-23 form the signal peptide; it reads MKRGCAIAVMICGLITSVSAASA.

It belongs to the surface antigen msp4 family.

This is an uncharacterized protein from Brucella melitensis biotype 1 (strain ATCC 23456 / CCUG 17765 / NCTC 10094 / 16M).